The chain runs to 653 residues: MASDSRRGTGSPKMKGRENAKDTLCRNVTIYGRCRYEDKGCVYNHDPNKTNSAYQSDSKRRLNVDSPSFTPSLLSSNGSSPTSSSATLKKTTTISPKAANAAPFQPRGISSRSNASTPSARAESAAPDWSVAEVQEFVPQGFETSHMASLQGNGNGPVPSTSPFDPFVTTSNPLAAANAVGPVQANPFSPDTAAAALGGATFFTGQTGFQPVQYHLYAPIGPHSQNTLGYQRNVHDLFLPNDFREELQKKAAATLQTLPNTQLPAQVDYFHSLVPLDLNHQKNATIFGFPSWVYKAQSSKDGNFYALRRLEGFRLTNEKAIRSVQAWKRVCNGSVVTVHDAFTSRSFQDSSLIFVTDYHPLSKTLAEQHLSAGNRFQGRSNTHIPEQVLWGYMTQIANALKAIHSNGLAAKIIDPSKILLTGRNRIRLNACAIMDVVQFDTQRSIADLQHQDLVSFGQLIVTLGANSPSVMHNPTKAMEHFTRAYSPQMKNSVFWLLNSMQKDQDHTIDIFITGISSQLMSTFDSALHMDDQLTSDLSRELENGRLVRLMTKLNFINERPEYEHDRQWSENGERYFLKIFRDYVFHQVDAHGDPVVDLGHVLACLNKLDAGSDEKITLVSRDEQSCFIVSYKEIKKALESSFQALLKPTRRVH.

2 disordered regions span residues 1 to 21 and 45 to 128; these read MASD…ENAK and HDPN…AAPD. The segment at 19 to 48 adopts a C3H1-type zinc-finger fold; it reads NAKDTLCRNVTIYGRCRYEDKGCVYNHDPN. Low complexity predominate over residues 68-95; it reads SFTPSLLSSNGSSPTSSSATLKKTTTIS. Residues 108-119 are compositionally biased toward polar residues; sequence GISSRSNASTPS. The pseudokinase domain stretch occupies residues 256–516; it reads QTLPNTQLPA…TIDIFITGIS (261 aa). Residues R308, 357–364, and 416–417 each bind ATP; these read DYHPLSKT and SK. A coiled-coil region spans residues 517–555; it reads SQLMSTFDSALHMDDQLTSDLSRELENGRLVRLMTKLNF. A knob domain region spans residues 556–653; sequence INERPEYEHD…ALLKPTRRVH (98 aa).

Belongs to the protein kinase superfamily. PAN3 family. As to quaternary structure, homodimer. Forms a heterotrimer with a catalytic subunit pan2 to form the poly(A)-nuclease (PAN) deadenylation complex. Interacts (via PAM-2 motif) with poly(A)-binding protein pab1 (via PABC domain), conferring substrate specificity of the enzyme complex.

It is found in the cytoplasm. Regulatory subunit of the poly(A)-nuclease (PAN) deadenylation complex, one of two cytoplasmic mRNA deadenylases involved in mRNA turnover. PAN specifically shortens poly(A) tails of RNA and the activity is stimulated by poly(A)-binding protein pab1. PAN deadenylation is followed by rapid degradation of the shortened mRNA tails by the CCR4-NOT complex. Deadenylated mRNAs are then degraded by two alternative mechanisms, namely exosome-mediated 3'-5' exonucleolytic degradation, or deadenylation-dependent mRNA decaping and subsequent 5'-3' exonucleolytic degradation by xrn1. May also be involved in post-transcriptional maturation of mRNA poly(A) tails. pan3 acts as a positive regulator for PAN activity, recruiting the catalytic subunit pan2 to mRNA via its interaction with RNA and with pab1. The sequence is that of PAN2-PAN3 deadenylation complex subunit PAN3 from Aspergillus terreus (strain NIH 2624 / FGSC A1156).